A 741-amino-acid polypeptide reads, in one-letter code: Wall-associated receptor kinase 3 (741 aa).

Positions 1 to 23 (MKFQEGVFLVVIFFLAYTQLVKG) are cleaved as a signal peptide. Topologically, residues 24 to 342 (QHQPREDCKL…CTRPEYKRTR (319 aa)) are extracellular. Residues Asn37, Asn59, Asn78, Asn100, Asn103, Asn141, Asn192, Asn199, Asn232, Asn246, Asn261, and Asn266 are each glycosylated (N-linked (GlcNAc...) asparagine). The 48-residue stretch at 245–292 (GNQTCEQAGSTRICGKNSSCYNSTTRNGYICKCNEGYDGNPYRSEGCK) folds into the EGF-like 1 domain. 6 disulfide bridges follow: Cys249–Cys264, Cys258–Cys275, Cys277–Cys291, Cys297–Cys310, Cys304–Cys319, and Cys321–Cys333. Positions 293–334 (DIDECISDTHNCSDPKTCRNRDGGFDCKCPSGYDLNSSMSCT) constitute an EGF-like 2; calcium-binding domain. A glycan (N-linked (GlcNAc...) asparagine) is linked at Asn303. N-linked (GlcNAc...) asparagine glycosylation is present at Asn328. Residues 343 to 363 (IFLVIIIGVLVLLLAAICIQH) traverse the membrane as a helical segment. At 364-741 (ATKQRKYTKL…VAILDIETGR (378 aa)) the chain is on the cytoplasmic side. At Thr404 the chain carries Phosphothreonine. The Protein kinase domain occupies 415–698 (YDESRILGQG…RVEKTKHKWS (284 aa)). ATP is bound by residues 421–429 (LGQGGQGTV) and Lys443. At Tyr488 the chain carries Phosphotyrosine. The active-site Proton acceptor is the Asp540. Residues Thr574 and Thr579 each carry the phosphothreonine modification. Phosphotyrosine is present on Tyr587.

The protein belongs to the protein kinase superfamily. Ser/Thr protein kinase family. Predominantly expressed in green tissues such as stems and leaves.

Its subcellular location is the membrane. It carries out the reaction L-seryl-[protein] + ATP = O-phospho-L-seryl-[protein] + ADP + H(+). The catalysed reaction is L-threonyl-[protein] + ATP = O-phospho-L-threonyl-[protein] + ADP + H(+). Its function is as follows. Serine/threonine-protein kinase that may function as a signaling receptor of extracellular matrix component. Binding to pectin may have significance in the control of cell expansion, morphogenesis and development. The chain is Wall-associated receptor kinase 3 (WAK3) from Arabidopsis thaliana (Mouse-ear cress).